A 184-amino-acid polypeptide reads, in one-letter code: Photosystem I assembly protein Ycf4 (184 aa).

A run of 2 helical transmembrane segments spans residues 21–43 and 58–78; these read NFFW…ISSY and LFVP…FISS.

This sequence belongs to the Ycf4 family.

It localises to the plastid. The protein localises to the chloroplast thylakoid membrane. Functionally, seems to be required for the assembly of the photosystem I complex. In Pinus thunbergii (Japanese black pine), this protein is Photosystem I assembly protein Ycf4.